We begin with the raw amino-acid sequence, 230 residues long: Orotidine 5'-phosphate decarboxylase (230 aa).

Substrate is bound by residues Asp11, Lys34, 61–70 (DLKLHDIPNT), Thr117, Arg179, Gln188, Gly208, and Arg209. Lys63 functions as the Proton donor in the catalytic mechanism.

It belongs to the OMP decarboxylase family. Type 1 subfamily. In terms of assembly, homodimer.

The enzyme catalyses orotidine 5'-phosphate + H(+) = UMP + CO2. It functions in the pathway pyrimidine metabolism; UMP biosynthesis via de novo pathway; UMP from orotate: step 2/2. Catalyzes the decarboxylation of orotidine 5'-monophosphate (OMP) to uridine 5'-monophosphate (UMP). This chain is Orotidine 5'-phosphate decarboxylase, found in Streptococcus sanguinis (strain SK36).